A 452-amino-acid chain; its full sequence is Probable V-type proton ATPase subunit H (452 aa).

This sequence belongs to the V-ATPase H subunit family. As to quaternary structure, V-ATPase is a heteromultimeric enzyme composed of a peripheral catalytic V1 complex (components A to H) attached to an integral membrane V0 proton pore complex (components: a, c, c', c'' and d).

Its function is as follows. Subunit of the peripheral V1 complex of vacuolar ATPase. Subunit H activates the ATPase activity of the enzyme and couples ATPase activity to proton flow. Vacuolar ATPase is responsible for acidifying a variety of intracellular compartments in eukaryotic cells, thus providing most of the energy required for transport processes in the vacuolar system. The protein is Probable V-type proton ATPase subunit H of Oryza sativa subsp. japonica (Rice).